A 447-amino-acid chain; its full sequence is Probable ribonuclease FAU-1 (447 aa).

Positions 424–447 (PEAPGGKICTPEGLTSAPPRSSSA) are disordered.

Belongs to the FAU-1 family.

In terms of biological role, probable RNase involved in rRNA stability through maturation and/or degradation of precursor rRNAs. Binds to RNA in loop regions with AU-rich sequences. The sequence is that of Probable ribonuclease FAU-1 from Pyrobaculum neutrophilum (strain DSM 2338 / JCM 9278 / NBRC 100436 / V24Sta) (Thermoproteus neutrophilus).